Consider the following 549-residue polypeptide: Glucose-6-phosphate isomerase (549 aa).

The active-site Proton donor is the E353. Catalysis depends on residues H384 and K512.

Belongs to the GPI family.

Its subcellular location is the cytoplasm. The enzyme catalyses alpha-D-glucose 6-phosphate = beta-D-fructose 6-phosphate. It participates in carbohydrate biosynthesis; gluconeogenesis. It functions in the pathway carbohydrate degradation; glycolysis; D-glyceraldehyde 3-phosphate and glycerone phosphate from D-glucose: step 2/4. Catalyzes the reversible isomerization of glucose-6-phosphate to fructose-6-phosphate. This Solidesulfovibrio magneticus (strain ATCC 700980 / DSM 13731 / RS-1) (Desulfovibrio magneticus) protein is Glucose-6-phosphate isomerase.